The chain runs to 797 residues: Mitochondrial inner membrane m-AAA protease component AFG3L2 (797 aa).

The N-terminal 38 residues, 1 to 38, are a transit peptide targeting the mitochondrion; it reads MAHRCLRLWGRGGCWPRGLQQLLVPGGVGPGEQPCLRT. A propeptide spans 39 to 66 (removed in mature form); it reads LYRFVTTQARASRNSLLTDIIAAYQRFC. Residues 39–142 are Mitochondrial matrix-facing; that stretch reads LYRFVTTQAR…KGDIPWDDKD (104 aa). The disordered stretch occupies residues 76–126; sequence YFPNGKNGKKASEPKEVMGEKKESKPAATTRSSGGGGGGGGKRGGKKDDSH. The span at 85–100 shows a compositional bias: basic and acidic residues; the sequence is KASEPKEVMGEKKESK. The segment covering 108-117 has biased composition (gly residues); sequence SGGGGGGGGK. Residue K117 is modified to N6-succinyllysine. The chain crosses the membrane as a helical span at residues 143-163; it reads FRMFFLWTALFWGGVMFYLLL. The Mitochondrial intermembrane portion of the chain corresponds to 164–250; the sequence is KRSGREITWK…VPVVYIAESD (87 aa). The helical transmembrane segment at 251–271 threads the bilayer; that stretch reads GSFLLSMLPTVLIIAFLLYTI. The Mitochondrial matrix segment spans residues 272-797; that stretch reads RRGPAGIGRT…EEPPGEKVAN (526 aa). 8 residues coordinate ATP: V310, A311, T352, G353, K354, T355, L356, and H490. H574 contacts Zn(2+). E575 is a catalytic residue. H578 and D649 together coordinate Zn(2+). The disordered stretch occupies residues 759 to 797; it reads FVEGTGSLDEDTSLPEGLKDWNKEREKEKEEPPGEKVAN. The segment covering 775-797 has biased composition (basic and acidic residues); the sequence is GLKDWNKEREKEKEEPPGEKVAN.

In the N-terminal section; belongs to the AAA ATPase family. This sequence in the C-terminal section; belongs to the peptidase M41 family. Homohexamer. Forms heterohexamers with SPG7. The m-AAA protease is either composed of homohexamers of AFG3L2 or heterohexamers of AFG3L2 and SPG7. Interacts with MAIP1. Interacts with DNAJC19. Interacts with PHB2. It depends on Zn(2+) as a cofactor. Post-translationally, upon import into the mitochondrion, the N-terminal transit peptide is cleaved to generate an intermediate form which undergoes autocatalytic proteolytic processing to generate the proteolytically active mature form. Ubiquitous. Highly expressed in the cerebellar Purkinje cells.

The protein resides in the mitochondrion inner membrane. It carries out the reaction ATP + H2O = ADP + phosphate + H(+). Catalytic component of the m-AAA protease, a protease that plays a key role in proteostasis of inner mitochondrial membrane proteins, and which is essential for axonal and neuron development. AFG3L2 possesses both ATPase and protease activities: the ATPase activity is required to unfold substrates, threading them into the internal proteolytic cavity for hydrolysis into small peptide fragments. The m-AAA protease carries out quality control in the inner membrane of the mitochondria by mediating degradation of mistranslated or misfolded polypeptides. The m-AAA protease complex also promotes the processing and maturation of mitochondrial proteins, such as MRPL32/bL32m, PINK1 and SP7. Mediates protein maturation of the mitochondrial ribosomal subunit MRPL32/bL32m by catalyzing the cleavage of the presequence of MRPL32/bL32m prior to assembly into the mitochondrial ribosome. Required for SPG7 maturation into its active mature form after SPG7 cleavage by mitochondrial-processing peptidase (MPP). Required for the maturation of PINK1 into its 52kDa mature form after its cleavage by mitochondrial-processing peptidase (MPP). Acts as a regulator of calcium in neurons by mediating degradation of SMDT1/EMRE before its assembly with the uniporter complex, limiting the availability of SMDT1/EMRE for MCU assembly and promoting efficient assembly of gatekeeper subunits with MCU. Promotes the proteolytic degradation of GHITM upon hyperpolarization of mitochondria: progressive GHITM degradation leads to respiratory complex I degradation and broad reshaping of the mitochondrial proteome by AFG3L2. Also acts as a regulator of mitochondrial glutathione homeostasis by mediating cleavage and degradation of SLC25A39. SLC25A39 cleavage is prevented when SLC25A39 binds iron-sulfur. Involved in the regulation of OMA1-dependent processing of OPA1. May act by mediating processing of OMA1 precursor, participating in OMA1 maturation. This chain is Mitochondrial inner membrane m-AAA protease component AFG3L2, found in Homo sapiens (Human).